A 613-amino-acid chain; its full sequence is 8-methylmenaquinol:fumarate reductase flavoprotein subunit (613 aa).

A signal peptide (tat-type signal) is located at residues 1-33 (MSEQFTRREFLQSACITMGALAVSTSGVDRAFA). FAD-binding positions include 53 to 58 (GSGAAG), 78 to 93 (SKVM…AEGG), and Asp255. His276 and Thr288 together coordinate substrate. Catalysis depends on Arg319, which acts as the Proton acceptor. His387 contributes to the substrate binding site. FAD is bound at residue Glu413. Arg424 contacts substrate. FAD is bound at residue 429–430 (SL).

Belongs to the FAD-dependent oxidoreductase 2 family. FRD/SDH subfamily. The MFR complex is composed of three subunits: a flavoprotein (SdhA), an iron-sulfur protein (SdhB), and one hydrophobic anchor protein (SdhE). It depends on FAD as a cofactor. Predicted to be exported by the Tat system. The position of the signal peptide cleavage has not been experimentally proven.

It localises to the periplasm. Its subcellular location is the cell membrane. It carries out the reaction 8-methylmenaquinone-6 + succinate = 8-methylmenaquinol-6 + fumarate. In terms of biological role, flavoprotein subunit of 8-methylmenaquinol:fumarate reductase (MFR), that catalyzes the reduction of fumarate using 8-methylmenaquinol-6 as electron donor. The complex shows no succinate oxidation activity. Is involved in anaerobic metabolism. SdhA contains the dicarboxylate reduction site. This chain is 8-methylmenaquinol:fumarate reductase flavoprotein subunit, found in Wolinella succinogenes (strain ATCC 29543 / DSM 1740 / CCUG 13145 / JCM 31913 / LMG 7466 / NCTC 11488 / FDC 602W) (Vibrio succinogenes).